Reading from the N-terminus, the 425-residue chain is Serine--tRNA ligase (425 aa).

An L-serine-binding site is contributed by Thr230–Glu232. Residue Arg261–Glu263 participates in ATP binding. Glu284 provides a ligand contact to L-serine. ATP is bound at residue Glu348 to Ser351. Ser384 is a binding site for L-serine.

The protein belongs to the class-II aminoacyl-tRNA synthetase family. Type-1 seryl-tRNA synthetase subfamily. As to quaternary structure, homodimer. The tRNA molecule binds across the dimer.

It is found in the cytoplasm. It carries out the reaction tRNA(Ser) + L-serine + ATP = L-seryl-tRNA(Ser) + AMP + diphosphate + H(+). It catalyses the reaction tRNA(Sec) + L-serine + ATP = L-seryl-tRNA(Sec) + AMP + diphosphate + H(+). The protein operates within aminoacyl-tRNA biosynthesis; selenocysteinyl-tRNA(Sec) biosynthesis; L-seryl-tRNA(Sec) from L-serine and tRNA(Sec): step 1/1. Catalyzes the attachment of serine to tRNA(Ser). Is also able to aminoacylate tRNA(Sec) with serine, to form the misacylated tRNA L-seryl-tRNA(Sec), which will be further converted into selenocysteinyl-tRNA(Sec). This is Serine--tRNA ligase from Nitratidesulfovibrio vulgaris (strain DSM 19637 / Miyazaki F) (Desulfovibrio vulgaris).